The following is an 80-amino-acid chain: U6-ctenitoxin-Pn1a (80 aa).

The first 21 residues, M1 to A21, serve as a signal peptide directing secretion. Residues E22 to R37 constitute a propeptide that is removed on maturation. Disulfide bonds link C39–C54, C46–C59, C53–C69, and C61–C67. The propeptide occupies T72 to R80.

Belongs to the neurotoxin 02 (plectoxin) family. 01 (Tx3) subfamily. As to expression, expressed by the venom gland.

Its subcellular location is the secreted. In terms of biological role, antagonist of L-type calcium channels (Cav1/CACNA1). The chain is U6-ctenitoxin-Pn1a from Phoneutria nigriventer (Brazilian armed spider).